Here is a 161-residue protein sequence, read N- to C-terminus: Cyclic pyranopterin monophosphate synthase (161 aa).

Substrate-binding positions include 75–77 (LCH) and 113–114 (ME). Asp-128 is an active-site residue.

Belongs to the MoaC family. Homohexamer; trimer of dimers.

It catalyses the reaction (8S)-3',8-cyclo-7,8-dihydroguanosine 5'-triphosphate = cyclic pyranopterin phosphate + diphosphate. Its pathway is cofactor biosynthesis; molybdopterin biosynthesis. Functionally, catalyzes the conversion of (8S)-3',8-cyclo-7,8-dihydroguanosine 5'-triphosphate to cyclic pyranopterin monophosphate (cPMP). The sequence is that of Cyclic pyranopterin monophosphate synthase from Edwardsiella ictaluri (strain 93-146).